The chain runs to 391 residues: NADH-quinone oxidoreductase subunit D (391 aa).

This sequence belongs to the complex I 49 kDa subunit family. As to quaternary structure, NDH-1 is composed of 14 different subunits. Subunits NuoB, C, D, E, F, and G constitute the peripheral sector of the complex.

It is found in the cell inner membrane. The enzyme catalyses a quinone + NADH + 5 H(+)(in) = a quinol + NAD(+) + 4 H(+)(out). Its function is as follows. NDH-1 shuttles electrons from NADH, via FMN and iron-sulfur (Fe-S) centers, to quinones in the respiratory chain. The immediate electron acceptor for the enzyme in this species is believed to be ubiquinone. Couples the redox reaction to proton translocation (for every two electrons transferred, four hydrogen ions are translocated across the cytoplasmic membrane), and thus conserves the redox energy in a proton gradient. In Pelagibacter ubique (strain HTCC1062), this protein is NADH-quinone oxidoreductase subunit D.